Consider the following 612-residue polypeptide: MTIKDARTPASTQNTAQADTAENTDTAEDTEAGKSIGWHKAYVEGSRPDLRVPVRQVHLTNGQSVTLYDTSGPYTDPLVDTDVRRGLAPLRENWIIARGDTEEYAGRPVRPEDDGIKHTSPRGGLRNLDAVFPGRPRQPRRGRDGNAVTQLAYARRGEITPEMEYVAVRENVSPEVVREEIAAGRAVLPANINHPEIEPMIIGKRFLVKVNANIGNSAVTSSIEEEVDKMTWATRWGADTVMDLSTGRNIHTTREWVLRNSPVPIGTVPLYQALEKVDGRAEELTWEIYKDTVIEQAEQGVDYMTVHAGVRLPYVPLTANRKTGIVSRGGSIMAAWCLAHHKESFLYENFEELCEILAAYDVTYSLGDGLRPGSIADANDEAQFAELRTLGELNRIAKRCSVQTMIEGPGHVPMHKIKENIDLQQEICDEAPFYTLGPLTTDVAPAYDHITSGIGAAMIAWWGTAMLCYVTPKEHLGLPNRDDVKTGVITYKIAAHAADLAKGHPGAQEWDDALSDARFEFRWEDQFNLALDPDTAREFHDETLPAEPAKTAHFCSMCGPKFCSMKISQSITEQFGGTAAAGATAEEVAAGMLQKSKEFAESGNRVYLPLAD.

2 disordered regions span residues 1–33 (MTIK…TEAG) and 105–146 (AGRP…RDGN). Positions 12–24 (TQNTAQADTAENT) are enriched in low complexity. Basic and acidic residues predominate over residues 105–117 (AGRPVRPEDDGIK). Residues Asn-213, Met-242, Tyr-271, His-307, 327 to 329 (SRG), 368 to 371 (DGLR), and Glu-407 each bind substrate. His-411 lines the Zn(2+) pocket. Tyr-434 is a binding site for substrate. His-475 provides a ligand contact to Zn(2+). [4Fe-4S] cluster is bound by residues Cys-555, Cys-558, and Cys-563.

It belongs to the ThiC family. The cofactor is [4Fe-4S] cluster.

It catalyses the reaction 5-amino-1-(5-phospho-beta-D-ribosyl)imidazole + S-adenosyl-L-methionine = 4-amino-2-methyl-5-(phosphooxymethyl)pyrimidine + CO + 5'-deoxyadenosine + formate + L-methionine + 3 H(+). It functions in the pathway cofactor biosynthesis; thiamine diphosphate biosynthesis. Its function is as follows. Catalyzes the synthesis of the hydroxymethylpyrimidine phosphate (HMP-P) moiety of thiamine from aminoimidazole ribotide (AIR) in a radical S-adenosyl-L-methionine (SAM)-dependent reaction. The protein is Phosphomethylpyrimidine synthase of Streptomyces coelicolor (strain ATCC BAA-471 / A3(2) / M145).